The sequence spans 383 residues: Lipoyl synthase, mitochondrial (383 aa).

A mitochondrion-targeting transit peptide spans 1–19 (MHASTLTRCMRVAQNARCL). Positions 69–97 (DAAPGTKPSRKPNASNRKPKWLKAQPTQG) are disordered. Positions 116, 121, 127, 147, 151, 154, and 362 each coordinate [4Fe-4S] cluster. The Radical SAM core domain occupies 132 to 351 (KDGIATATIM…QKVAEQMGFL (220 aa)).

This sequence belongs to the radical SAM superfamily. Lipoyl synthase family. [4Fe-4S] cluster is required as a cofactor.

The protein resides in the mitochondrion. The enzyme catalyses [[Fe-S] cluster scaffold protein carrying a second [4Fe-4S](2+) cluster] + N(6)-octanoyl-L-lysyl-[protein] + 2 oxidized [2Fe-2S]-[ferredoxin] + 2 S-adenosyl-L-methionine + 4 H(+) = [[Fe-S] cluster scaffold protein] + N(6)-[(R)-dihydrolipoyl]-L-lysyl-[protein] + 4 Fe(3+) + 2 hydrogen sulfide + 2 5'-deoxyadenosine + 2 L-methionine + 2 reduced [2Fe-2S]-[ferredoxin]. Its pathway is protein modification; protein lipoylation via endogenous pathway; protein N(6)-(lipoyl)lysine from octanoyl-[acyl-carrier-protein]: step 2/2. Its function is as follows. Catalyzes the radical-mediated insertion of two sulfur atoms into the C-6 and C-8 positions of the octanoyl moiety bound to the lipoyl domains of lipoate-dependent enzymes, thereby converting the octanoylated domains into lipoylated derivatives. The polypeptide is Lipoyl synthase, mitochondrial (Phytophthora infestans (strain T30-4) (Potato late blight agent)).